The following is a 188-amino-acid chain: MEERNEQVVEEVKEAQVEEAVTPENSEETVEEKSEAALLQEKVDELQAKLTETEGRTLRLQADFENYKRRVQMDKQAAEKYRAQSLVSDILPALDNFERAMQVEATDEQTKSLLQGMEMVHRQLLEALTKEGVEVIEAVGKQFDPNEHQAIMQVEDSEFESNAVVEEFQKGYKLKDRVIRPSMVKVNQ.

The segment covering 1 to 16 (MEERNEQVVEEVKEAQ) has biased composition (basic and acidic residues). The disordered stretch occupies residues 1-31 (MEERNEQVVEEVKEAQVEEAVTPENSEETVE).

The protein belongs to the GrpE family. Homodimer.

The protein resides in the cytoplasm. Its function is as follows. Participates actively in the response to hyperosmotic and heat shock by preventing the aggregation of stress-denatured proteins, in association with DnaK and GrpE. It is the nucleotide exchange factor for DnaK and may function as a thermosensor. Unfolded proteins bind initially to DnaJ; upon interaction with the DnaJ-bound protein, DnaK hydrolyzes its bound ATP, resulting in the formation of a stable complex. GrpE releases ADP from DnaK; ATP binding to DnaK triggers the release of the substrate protein, thus completing the reaction cycle. Several rounds of ATP-dependent interactions between DnaJ, DnaK and GrpE are required for fully efficient folding. The protein is Protein GrpE of Bacillus cereus (strain G9842).